The chain runs to 59 residues: MAELKITQVRGTIGARWNQRESLRTLGLRKIRQSVVREDNAQTRGLIKTVHHLVVVEEV.

The protein belongs to the universal ribosomal protein uL30 family. In terms of assembly, part of the 50S ribosomal subunit.

The protein is Large ribosomal subunit protein uL30 of Mycobacterium sp. (strain JLS).